The chain runs to 144 residues: D-aminoacyl-tRNA deacylase (144 aa).

A Gly-cisPro motif, important for rejection of L-amino acids motif is present at residues 136–137 (GP).

It belongs to the DTD family. As to quaternary structure, homodimer.

The protein resides in the cytoplasm. It carries out the reaction glycyl-tRNA(Ala) + H2O = tRNA(Ala) + glycine + H(+). The catalysed reaction is a D-aminoacyl-tRNA + H2O = a tRNA + a D-alpha-amino acid + H(+). Its function is as follows. An aminoacyl-tRNA editing enzyme that deacylates mischarged D-aminoacyl-tRNAs. Also deacylates mischarged glycyl-tRNA(Ala), protecting cells against glycine mischarging by AlaRS. Acts via tRNA-based rather than protein-based catalysis; rejects L-amino acids rather than detecting D-amino acids in the active site. By recycling D-aminoacyl-tRNA to D-amino acids and free tRNA molecules, this enzyme counteracts the toxicity associated with the formation of D-aminoacyl-tRNA entities in vivo and helps enforce protein L-homochirality. The protein is D-aminoacyl-tRNA deacylase of Histophilus somni (strain 129Pt) (Haemophilus somnus).